A 332-amino-acid chain; its full sequence is Probable thc operon regulatory protein (332 aa).

The HTH araC/xylS-type domain maps to 227 to 328; it reads RLAVDYLEAH…GVSPSEDLRT (102 aa). 2 DNA-binding regions (H-T-H motif) span residues 244–265 and 295–318; these read AQVA…QNSL and VTEI…KQTF.

In terms of biological role, probably involved in the positive regulation of the thc operon for the degradation of the thiocarbamate herbicide EPTC. The chain is Probable thc operon regulatory protein (thcR) from Rhodococcus erythropolis (Arthrobacter picolinophilus).